Reading from the N-terminus, the 361-residue chain is MATTIPVPLPQSPYQVQIVPGGLAAIADHLAPLGLGKKIMVVSNPEIYDYYGEVVIQALQRAGYEVFQHLIPAGETHKTLASINELYDVAFQANLERNSTLLSLGGGVIGDMTGFGAATWLRGINFVQVPTSLLAMVDASIGGKTGVNHPQGKNLIGAFYQPRLVYIDPVVLKTLPEREFRAGMAEVIKYGVIWDSELFTALEEAEDLSSIDRLPDELLTKIIQRSCQAKVDVVSQDEKEAGLRAILNYGHTVGHGVESLTGYGVINHGEAVAIGMEAAAKIAHYLGLCDQSLGDRQRQLLLKTKLPTEMPPTLAVENLLASLLHDKKVKAGKVRFILPTAIGQVTISDAVTDEVIKATLG.

NAD(+) is bound by residues 107–111, 131–132, Lys144, and Lys153; these read GVIGD and TS. Zn(2+)-binding residues include Glu186, His251, and His268.

It belongs to the sugar phosphate cyclases superfamily. Dehydroquinate synthase family. NAD(+) is required as a cofactor. Requires Co(2+) as cofactor. Zn(2+) serves as cofactor.

The protein localises to the cytoplasm. It carries out the reaction 7-phospho-2-dehydro-3-deoxy-D-arabino-heptonate = 3-dehydroquinate + phosphate. It functions in the pathway metabolic intermediate biosynthesis; chorismate biosynthesis; chorismate from D-erythrose 4-phosphate and phosphoenolpyruvate: step 2/7. Its function is as follows. Catalyzes the conversion of 3-deoxy-D-arabino-heptulosonate 7-phosphate (DAHP) to dehydroquinate (DHQ). This Synechocystis sp. (strain ATCC 27184 / PCC 6803 / Kazusa) protein is 3-dehydroquinate synthase.